We begin with the raw amino-acid sequence, 398 residues long: tRNA N6-adenosine threonylcarbamoyltransferase (398 aa).

A divalent metal cation contacts are provided by His162, His166, and Tyr183. Substrate is bound by residues 183–187 (YVSGG), Asp215, Gly230, Glu234, and Asn329. Asp357 serves as a coordination point for a divalent metal cation.

This sequence belongs to the KAE1 / TsaD family. In terms of assembly, component of the EKC/KEOPS complex composed of at least BUD32, CGI121, GON7, KAE1 and PCC1; the whole complex dimerizes. A divalent metal cation is required as a cofactor.

The protein localises to the cytoplasm. Its subcellular location is the nucleus. The catalysed reaction is L-threonylcarbamoyladenylate + adenosine(37) in tRNA = N(6)-L-threonylcarbamoyladenosine(37) in tRNA + AMP + H(+). Functionally, component of the EKC/KEOPS complex that is required for the formation of a threonylcarbamoyl group on adenosine at position 37 (t(6)A37) in tRNAs that read codons beginning with adenine. The complex is probably involved in the transfer of the threonylcarbamoyl moiety of threonylcarbamoyl-AMP (TC-AMP) to the N6 group of A37. KAE1 likely plays a direct catalytic role in this reaction, but requires other protein(s) of the complex to fulfill this activity. The EKC/KEOPS complex also promotes both telomere uncapping and telomere elongation. The complex is required for efficient recruitment of transcriptional coactivators. In Cryptococcus neoformans var. neoformans serotype D (strain B-3501A) (Filobasidiella neoformans), this protein is tRNA N6-adenosine threonylcarbamoyltransferase.